The primary structure comprises 264 residues: Probable DNA polymerase sliding clamp 2 (264 aa).

A DNA-binding region spans residues 75–94; that stretch reads SIAQEATVGIKISNFVRILD.

Belongs to the PCNA family.

In terms of biological role, sliding clamp subunit. Responsible for tethering the catalytic subunit of DNA polymerase to DNA during high-speed replication. The protein is Probable DNA polymerase sliding clamp 2 of Paramecium bursaria Chlorella virus 1 (PBCV-1).